We begin with the raw amino-acid sequence, 115 residues long: Salivary anti-complement protein (115 aa).

The signal sequence occupies residues 1 to 22 (MKFFYLIFSAIFFLADPALVKC). 3 disulfides stabilise this stretch: cysteine 26–cysteine 108, cysteine 41–cysteine 92, and cysteine 83–cysteine 101.

In terms of assembly, may form multimers. As to expression, salivary gland (at protein level).

The protein resides in the secreted. Functionally, salivary protein that inhibits the classical pathway of complement system activation in the host while having no inhibitory effect on the alternative or lectin pathways. Prevent cleavage of host C4 and consequently impairs the activation of factors downstream of C4b in the complement cascade. The protein is Salivary anti-complement protein of Lutzomyia longipalpis (Sand fly).